Consider the following 66-residue polypeptide: Jindongenin-1a (66 aa).

Residues 1–22 (MFTLKKPLLLLFFLGTVSLSLC) form the signal peptide. Residues 23–40 (EQERAADDDEGEVIEEEV) constitute a propeptide that is removed on maturation. Residues Cys-60 and Cys-66 are joined by a disulfide bond.

As to expression, expressed by the skin glands.

It localises to the secreted. In terms of biological role, displays broad-spectrum antibacterial activity against a range of Gram-positive and Gram-negative bacteria. Also displays antifungal activity against C.albicans ATCC 2002. Has low hemolytic activity, low cytotoxicity and low antioxidant activity. The chain is Jindongenin-1a from Amolops jingdongensis (Chinese torrent frog).